A 301-amino-acid polypeptide reads, in one-letter code: Transcription factor bHLH103 (301 aa).

A KRAB domain is found at 29-106; the sequence is PRSAEIVVDF…LEGLFDSSEQ (78 aa). 2 disordered regions span residues 161 to 184 and 239 to 272; these read EKSGELEDIESSQPLKRPRLETPS and TSPHLNSIGSGEQKQWSDKSSNNTHNQNCSPRQD. Residues 180–229 form the bHLH domain; it reads LETPSHFPSFKVRKEKLGDRITALQQLVSPFGKTDTASVLHDAIDYIKFL. Residues 239-269 show a composition bias toward polar residues; sequence TSPHLNSIGSGEQKQWSDKSSNNTHNQNCSP.

As to quaternary structure, homodimer. In terms of tissue distribution, mature root endodermis.

Its subcellular location is the nucleus. This chain is Transcription factor bHLH103 (BHLH103), found in Arabidopsis thaliana (Mouse-ear cress).